The chain runs to 937 residues: Periplasmic nitrate reductase (937 aa).

A signal peptide (tat-type signal) is located at residues 1 to 42 (MTSKIQGKKPTLSRRDFIKSAAAASAAASVGLSIPSVMSAEA). The 4Fe-4S Mo/W bis-MGD-type domain maps to 49-110 (WKWDKSVCRF…FCAKIMYGAD (62 aa)). [4Fe-4S] cluster-binding residues include Cys-56, Cys-59, Cys-63, and Cys-96. Mo-bis(molybdopterin guanine dinucleotide)-binding positions include Lys-98, Gln-166, Asn-191, Cys-195, 228–235 (WGANMAEM), Met-433, Gln-437, Asn-543, 568–569 (SE), Lys-591, Asp-618, and 827–836 (TGRVLEHWHS). Trp-903 contributes to the substrate binding site. Residues Asn-911 and Lys-928 each contribute to the Mo-bis(molybdopterin guanine dinucleotide) site.

The protein belongs to the prokaryotic molybdopterin-containing oxidoreductase family. NasA/NapA/NarB subfamily. In terms of assembly, component of the periplasmic nitrate reductase NapAB complex composed of NapA and NapB. It depends on [4Fe-4S] cluster as a cofactor. The cofactor is Mo-bis(molybdopterin guanine dinucleotide). In terms of processing, predicted to be exported by the Tat system. The position of the signal peptide cleavage has not been experimentally proven.

The protein resides in the periplasm. It carries out the reaction 2 Fe(II)-[cytochrome] + nitrate + 2 H(+) = 2 Fe(III)-[cytochrome] + nitrite + H2O. In terms of biological role, catalytic subunit of the periplasmic nitrate reductase complex NapAB. Receives electrons from NapB and catalyzes the reduction of nitrate to nitrite. This is Periplasmic nitrate reductase from Helicobacter hepaticus (strain ATCC 51449 / 3B1).